A 485-amino-acid chain; its full sequence is Glutamyl-tRNA(Gln) amidotransferase subunit A (485 aa).

Residues Lys76 and Ser155 each act as charge relay system in the active site. Residue Ser179 is the Acyl-ester intermediate of the active site.

It belongs to the amidase family. GatA subfamily. Heterotrimer of A, B and C subunits.

The enzyme catalyses L-glutamyl-tRNA(Gln) + L-glutamine + ATP + H2O = L-glutaminyl-tRNA(Gln) + L-glutamate + ADP + phosphate + H(+). Functionally, allows the formation of correctly charged Gln-tRNA(Gln) through the transamidation of misacylated Glu-tRNA(Gln) in organisms which lack glutaminyl-tRNA synthetase. The reaction takes place in the presence of glutamine and ATP through an activated gamma-phospho-Glu-tRNA(Gln). The polypeptide is Glutamyl-tRNA(Gln) amidotransferase subunit A (Marinobacter nauticus (strain ATCC 700491 / DSM 11845 / VT8) (Marinobacter aquaeolei)).